We begin with the raw amino-acid sequence, 749 residues long: Ribosomal RNA large subunit methyltransferase K/L (749 aa).

One can recognise a THUMP domain in the interval 43-154; sequence QGYKVCLWSR…KDKATIYLDL (112 aa). The segment at 386–406 is disordered; the sequence is VEPVAPKKTNKETPEPINPWT.

The protein belongs to the methyltransferase superfamily. RlmKL family.

The protein localises to the cytoplasm. It catalyses the reaction guanosine(2445) in 23S rRNA + S-adenosyl-L-methionine = N(2)-methylguanosine(2445) in 23S rRNA + S-adenosyl-L-homocysteine + H(+). It carries out the reaction guanosine(2069) in 23S rRNA + S-adenosyl-L-methionine = N(2)-methylguanosine(2069) in 23S rRNA + S-adenosyl-L-homocysteine + H(+). Functionally, specifically methylates the guanine in position 2445 (m2G2445) and the guanine in position 2069 (m7G2069) of 23S rRNA. The polypeptide is Ribosomal RNA large subunit methyltransferase K/L (Psychromonas ingrahamii (strain DSM 17664 / CCUG 51855 / 37)).